Here is a 961-residue protein sequence, read N- to C-terminus: DNA replication licensing factor MCM2 (961 aa).

Residues 1–17 are compositionally biased toward polar residues; sequence MDDSENNAPSTPGSPGF. 2 disordered regions span residues 1-81 and 120-220; these read MDDS…FNDN and AEAE…EEDE. Over residues 39–78 the composition is skewed to acidic residues; sequence SDDDDDDVVGAEEAEVDPNVLPEDDGVVAAEEEEDGEDLF. Basic and acidic residues-rich tracts occupy residues 120–146 and 166–176; these read AEAE…LHDQ and PPREPRTPRSD. Over residues 205 to 220 the composition is skewed to acidic residues; that stretch reads QTDDDPYEDEFDEEDE. A C4-type zinc finger spans residues 380–406; sequence CSKCGTVLGPFFQNSYTEVKVGSCPEC. The MCM domain maps to 524-730; that stretch reads IGERIVKSIA…FTDEMLARFV (207 aa). An ATP-binding site is contributed by 574-581; it reads GDPGTAKS. The short motif at 706-709 is the Arginine finger element; sequence SRFD.

Belongs to the MCM family. Component of the minichromosome maintenance (MCM) complex, a heterotetramer composed of MCM2, MCM3, MCM4, MCM5, MCM6 and MCM7.

It localises to the nucleus. The catalysed reaction is ATP + H2O = ADP + phosphate + H(+). Probable component of the MCM2-7 complex (MCM complex) that may function as a DNA helicase and which is essential to undergo a single round of replication initiation and elongation per cell cycle in eukaryotic cells. This Oryza sativa subsp. indica (Rice) protein is DNA replication licensing factor MCM2.